The sequence spans 339 residues: Extracellular matrix protein-binding protein emp (339 aa).

The signal sequence occupies residues 1–26 (MKKKLFVLTMSTLFATQLINSNHANA).

The protein resides in the cell surface. Functionally, adhesin that binds to the host cell extracellular matrix proteins fibronectin, fibrinogen, collagen, and vitronectin. In Staphylococcus aureus (strain bovine RF122 / ET3-1), this protein is Extracellular matrix protein-binding protein emp (emp).